Here is a 257-residue protein sequence, read N- to C-terminus: Hydroxyethylthiazole kinase (257 aa).

Substrate is bound at residue M49. Residues R124 and T170 each coordinate ATP. G197 contacts substrate.

This sequence belongs to the Thz kinase family. Mg(2+) serves as cofactor.

The enzyme catalyses 5-(2-hydroxyethyl)-4-methylthiazole + ATP = 4-methyl-5-(2-phosphooxyethyl)-thiazole + ADP + H(+). It participates in cofactor biosynthesis; thiamine diphosphate biosynthesis; 4-methyl-5-(2-phosphoethyl)-thiazole from 5-(2-hydroxyethyl)-4-methylthiazole: step 1/1. Catalyzes the phosphorylation of the hydroxyl group of 4-methyl-5-beta-hydroxyethylthiazole (THZ). This is Hydroxyethylthiazole kinase from Klebsiella pneumoniae (strain 342).